The primary structure comprises 160 residues: Ubiquitin-like protein ATG12 (160 aa).

Residues 1–40 form a disordered region; that stretch reads MSETPKDQGPSSPSPSPSPSAASPMPLADNEVAGSGASSP. Residue Gly-160 forms a Glycyl lysine isopeptide (Gly-Lys) (interchain with K-102 in ATG5) linkage.

It belongs to the ATG12 family. As to quaternary structure, forms a conjugate with ATG5. Forms a thioester bond with the 'Cys-196' of ATG10. Interacts with the ATG7 C-terminal 40 amino acids domain. The ATG12-ATG5 conjugate forms a complex with several units of ATG16. The ATG12-ATG5 conjugate also associates with ATG3.

It localises to the preautophagosomal structure membrane. Functionally, ubiquitin-like protein involved in cytoplasm to vacuole transport (Cvt), autophagy vesicles formation, mitophagy, and nucleophagy. Conjugation with ATG5 through a ubiquitin-like conjugating system involving also ATG7 as an E1-like activating enzyme and ATG10 as an E2-like conjugating enzyme, is essential for its function. The ATG12-ATG5 conjugate acts as an E3-like enzyme which is required for lipidation of ATG8 and ATG8 association to the vesicle membranes. ATG12-ATG5 rearranges the ATG3 catalytic center and enhances its E2 activity. Autophagy is required for proper vegetative growth, asexual/sexual reproduction, and full virulence. Autophagy is particularly involved in the biosynthesis of deoxynivalenol (DON), an important virulence determinant. This chain is Ubiquitin-like protein ATG12, found in Gibberella zeae (strain ATCC MYA-4620 / CBS 123657 / FGSC 9075 / NRRL 31084 / PH-1) (Wheat head blight fungus).